A 335-amino-acid polypeptide reads, in one-letter code: Olfactory receptor 52B6 (335 aa).

The Extracellular portion of the chain corresponds to 1–45 (MAQVRALHKIMALFSANSIGAMNNSDTRIAGCFLTGIPGLEQLHI). N-linked (GlcNAc...) asparagine glycosylation occurs at asparagine 23. Residues 46-66 (WLSIPFCIMYITALEGNGILI) traverse the membrane as a helical segment. Residues 67-74 (CVILSQAI) lie on the Cytoplasmic side of the membrane. The helical transmembrane segment at 75-95 (LHEPMYIFLSMLASADVLLST) threads the bilayer. Over 96–119 (TTMPKALANLWLGYSLISFDGCLT) the chain is Extracellular. Cysteine 117 and cysteine 208 are disulfide-bonded. A helical membrane pass occupies residues 120–139 (QMFFIHFLFIHSAVLLAMAF). The Cytoplasmic portion of the chain corresponds to 140 to 158 (DRYVAICSPLRYVTILTSK). Residues 159 to 179 (VIGKIVTAALSHSFIIMFPSI) traverse the membrane as a helical segment. At 180–215 (FLLEHLHYCQINIIAHTFCEHMGIAHLSCSDISINV) the chain is on the extracellular side. Residues 216-236 (WYGLAAALLSTGLDIMLITVS) traverse the membrane as a helical segment. Residues 237-256 (YIHILQAVFRLLSQDARSKA) are Cytoplasmic-facing. The helical transmembrane segment at 257–277 (LSTCGSHICVILLFYVPALFS) threads the bilayer. Residues 278–293 (VFAYRFGGRSVPCYVH) are Extracellular-facing. A helical membrane pass occupies residues 294–314 (ILLASLYVVIPPMLNPVIYGV). Topologically, residues 315–335 (RTKPILEGAKQMFSNLAKGSK) are cytoplasmic.

This sequence belongs to the G-protein coupled receptor 1 family.

Its subcellular location is the cell membrane. Its function is as follows. Odorant receptor. This Homo sapiens (Human) protein is Olfactory receptor 52B6 (OR52B6).